A 453-amino-acid chain; its full sequence is MEIIEHKVEFKYKSIDEYQWTDNFKLDKQWEILRFKKNKIVQKSYMNRFPYSEPKKDYSIALYSKNKWYCLKDGVGSYISIQKEKPQIKDLTITEIKYEPYLVIYKLDFEYHIMMTILHCDERVKLLEYKRPFLKEGIILFNEMKIYVYNGLFSYKGNKIEDFELFVNEFNSQYKENYDRLFKIFGKSNHTHKSIDYKTWCKAKRENQQEWPLFTNIKIKDSIEFPNNSGIYYYYPDKYVGLARRNDDNLIPLIPKIYRKNHYENKNSLLYKYVNGLPIDEEENIPYSFIKEKYKNIKYHEDEKIIEVDYNNNVVKQKDMAEYYCYNNKLIQKIEEPVKLPKIEAQILNKRNERVEVLIDNEWKNLAGNRIDGIPTLPWNYKHIIHDYNKLGRLKKGKIMDLTHIGIVNENGTDIITWPYTDDLYIGRSIETKRLITFKYQKNVEIYDKLIDM.

Its function is as follows. The presence of the two linear plasmids, termed pGKL1 and pGKL2, in strains of Kluyveromyces lactis confers the killer phenotype to the host cell, by promoting the secretion of a toxin able to inhibit the growth of sensitive strains. This is an uncharacterized protein from Kluyveromyces lactis (strain ATCC 8585 / CBS 2359 / DSM 70799 / NBRC 1267 / NRRL Y-1140 / WM37) (Yeast).